A 910-amino-acid polypeptide reads, in one-letter code: Alanine--tRNA ligase (910 aa).

A compositionally biased stretch (basic and acidic residues) spans 488-505 (RHEEKKEDSKSEKGENTA). The segment at 488 to 507 (RHEEKKEDSKSEKGENTAEK) is disordered. His614, His618, Cys718, and His722 together coordinate Zn(2+).

It belongs to the class-II aminoacyl-tRNA synthetase family. The cofactor is Zn(2+).

It is found in the cytoplasm. It catalyses the reaction tRNA(Ala) + L-alanine + ATP = L-alanyl-tRNA(Ala) + AMP + diphosphate. Its function is as follows. Catalyzes the attachment of alanine to tRNA(Ala) in a two-step reaction: alanine is first activated by ATP to form Ala-AMP and then transferred to the acceptor end of tRNA(Ala). Also edits incorrectly charged Ser-tRNA(Ala) and Gly-tRNA(Ala) via its editing domain. The protein is Alanine--tRNA ligase of Methanococcus aeolicus (strain ATCC BAA-1280 / DSM 17508 / OCM 812 / Nankai-3).